The sequence spans 450 residues: LanC-like protein 2 (450 aa).

Residue G2 is the site of N-myristoyl glycine attachment. Residues G2 to G14 form an interaction with inositol phospholipids region. At Y198 the chain carries Phosphotyrosine.

Belongs to the LanC-like protein family. In terms of assembly, interacts with an array of inositol phospholipids such as phosphatidylinositol 3-phosphate (PI3P), phosphatidylinositol 4-phosphate (PI4P) and phosphatidylinositol 5-phosphate (PI5P). PIP-binding enhances membrane association. Post-translationally, myristoylated. Essential for membrane association.

Its subcellular location is the nucleus. It localises to the cytoplasm. It is found in the cell membrane. Its function is as follows. Necessary for abscisic acid (ABA) binding on the cell membrane and activation of the ABA signaling pathway in granulocytes. This Mus musculus (Mouse) protein is LanC-like protein 2 (Lancl2).